Here is a 29-residue protein sequence, read N- to C-terminus: LPLPPHPGHPGYINFSYEVLTPLKXYQSI.

Residue Ser-16 is modified to Phosphoserine.

The protein belongs to the amelogenin family.

It is found in the secreted. It localises to the extracellular space. The protein localises to the extracellular matrix. Functionally, tooth enamel proteins are produced in ameloblasts and play a role in biomineralization. The sequence is that of Amelogenin-like protein (AMEL) from Oryctolagus cuniculus (Rabbit).